A 215-amino-acid chain; its full sequence is Dual specificity phosphatase 29 (215 aa).

Residues 53-201 (HVNEVWPRLH…LRELDKQLVK (149 aa)) form the Tyrosine-protein phosphatase domain. 145-152 (HCAMGRSR) contributes to the substrate binding site. The Phosphocysteine intermediate role is filled by Cys-146.

This sequence belongs to the protein-tyrosine phosphatase family. Non-receptor class dual specificity subfamily. In terms of assembly, homodimer. Interacts with PRKAA2.

Its subcellular location is the cytoplasm. The protein resides in the nucleus. It catalyses the reaction O-phospho-L-tyrosyl-[protein] + H2O = L-tyrosyl-[protein] + phosphate. The enzyme catalyses O-phospho-L-seryl-[protein] + H2O = L-seryl-[protein] + phosphate. It carries out the reaction O-phospho-L-threonyl-[protein] + H2O = L-threonyl-[protein] + phosphate. Dual specificity phosphatase able to dephosphorylate phosphotyrosine, phosphoserine and phosphothreonine residues within the same substrate, with a preference for phosphotyrosine as a substrate. Involved in the modulation of intracellular signaling cascades. In skeletal muscle regulates systemic glucose homeostasis by activating, AMPK, an energy sensor protein kinase. Affects MAP kinase signaling though modulation of the MAPK1/2 cascade in skeletal muscle promoting muscle cell differentiation, development and atrophy. In Rattus norvegicus (Rat), this protein is Dual specificity phosphatase 29 (Dusp29).